The primary structure comprises 203 residues: MAYPDFTLENKLSGVIAGVDEVGRGPLAGPVMSAAVVFTNRNIIIEGINDSKKLTAKNRQVLYEKIISVAKFGIGMASVAEINSYNILQATKLSMERALVNLGIELDYVLVDGNQPPKVKWQVKSIVKGDSLSVSVAAASIVAKVARDQLMQELHNQYPEYNWYKNKGYGTKGHIDAINLYGVTEHHRKSFAPILNSTKRALL.

In terms of domain architecture, RNase H type-2 spans 14–203; that stretch reads GVIAGVDEVG…ILNSTKRALL (190 aa). Residues D20, E21, and D112 each contribute to the a divalent metal cation site.

It belongs to the RNase HII family. It depends on Mn(2+) as a cofactor. The cofactor is Mg(2+).

It is found in the cytoplasm. The catalysed reaction is Endonucleolytic cleavage to 5'-phosphomonoester.. Its function is as follows. Endonuclease that specifically degrades the RNA of RNA-DNA hybrids. This is Ribonuclease HII from Wolbachia sp. subsp. Brugia malayi (strain TRS).